The chain runs to 190 residues: Small ribosomal subunit protein eS7 (190 aa).

This sequence belongs to the eukaryotic ribosomal protein eS7 family.

This is Small ribosomal subunit protein eS7 (RpS7) from Manduca sexta (Tobacco hawkmoth).